The chain runs to 1460 residues: CLIP-associating protein 1-A (1460 aa).

HEAT repeat units lie at residues Thr87–Asn124 and Leu163–Glu200. Positions Ser237–Lys293 are disordered. Positions Pro279 to Lys293 are enriched in low complexity. HEAT repeat units lie at residues His407–Thr442 and His443–Thr479. Disordered regions lie at residues Ser545–Asn605, Ile640–Ile733, and Pro778–Tyr800. Over residues Ser550–Leu569 the composition is skewed to low complexity. Residues Thr571 to Arg597 show a composition bias toward polar residues. Positions Gln645–Asp659 are enriched in low complexity. Polar residues-rich tracts occupy residues Val669–Pro681 and Gln715–Ser724. Positions Ser789–Tyr800 are enriched in low complexity. An HEAT 5 repeat occupies Phe942–Glu979. A disordered region spans residues Leu1041 to Pro1084. Residues Lys1042–Asn1054 are compositionally biased toward low complexity. Positions Ser1066–Ser1078 are enriched in polar residues. HEAT repeat units follow at residues Leu1272–Leu1309 and Gly1390–Gln1427.

It belongs to the CLASP family.

The protein resides in the cytoplasm. Its subcellular location is the cytoskeleton. The protein localises to the microtubule organizing center. It localises to the centrosome. It is found in the chromosome. The protein resides in the centromere. Its subcellular location is the kinetochore. The protein localises to the spindle. It localises to the golgi apparatus. It is found in the trans-Golgi network. In terms of biological role, microtubule plus-end tracking protein that promotes the stabilization of dynamic microtubules during anaphase. Plays a crucial role in chromatin-induced microtubule formation. May also act at microtubule minus ends. May be involved in the nucleation of noncentrosomal microtubules originating from the trans-Golgi network (TGN). This is CLIP-associating protein 1-A (clasp1-a) from Xenopus laevis (African clawed frog).